The sequence spans 464 residues: Cytochrome P450 85A1 (464 aa).

A helical transmembrane segment spans residues 2-22; the sequence is AFFLIFLSSFFGLCIFCTALL. Residue C414 coordinates heme.

Belongs to the cytochrome P450 family. Heme is required as a cofactor. In terms of tissue distribution, expressed in sub-meristematic regions of shoot and root apexes, in zones undergoing lateral root formation, in fruits, and in all flower parts, with a high expression in young flower buds and at the joint in the pedicel.

The protein resides in the membrane. It catalyses the reaction 6-deoxocastasterone + reduced [NADPH--hemoprotein reductase] + O2 = 6alpha-hydroxycastasterone + oxidized [NADPH--hemoprotein reductase] + H2O + H(+). The catalysed reaction is 6alpha-hydroxycastasterone + reduced [NADPH--hemoprotein reductase] + O2 = castasterone + oxidized [NADPH--hemoprotein reductase] + 2 H2O + H(+). The enzyme catalyses 6-deoxocastasterone + 2 reduced [NADPH--hemoprotein reductase] + 2 O2 = castasterone + 2 oxidized [NADPH--hemoprotein reductase] + 3 H2O + 2 H(+). It functions in the pathway plant hormone biosynthesis; brassinosteroid biosynthesis. In terms of biological role, catalyzes the C6-oxidation step in brassinosteroids biosynthesis. Converts 6-deoxocastasterone (6-deoxoCS) to castasterone (CS). May also convert 6-deoxoteasterone (6-deoxoTE) to teasterone (TE), 3-dehydro-6-deoxoteasterone (6-deoxo3DT, 6-deoxo3DHT) to 3-dehydroteasterone (3DT, 3-DHT), and 6-deoxotyphasterol (6-deoxoTY) to typhasterol (TY), but not castasterone (CS) to brassinolide (BL). This chain is Cytochrome P450 85A1, found in Solanum lycopersicum (Tomato).